Here is a 144-residue protein sequence, read N- to C-terminus: uncharacterized protein (144 aa).

This is an uncharacterized protein from Archaeoglobus fulgidus (strain ATCC 49558 / DSM 4304 / JCM 9628 / NBRC 100126 / VC-16).